Consider the following 233-residue polypeptide: Large ribosomal subunit protein uL1 (233 aa).

Belongs to the universal ribosomal protein uL1 family. Part of the 50S ribosomal subunit.

Functionally, binds directly to 23S rRNA. The L1 stalk is quite mobile in the ribosome, and is involved in E site tRNA release. Its function is as follows. Protein L1 is also a translational repressor protein, it controls the translation of the L11 operon by binding to its mRNA. The sequence is that of Large ribosomal subunit protein uL1 from Brucella canis (strain ATCC 23365 / NCTC 10854 / RM-666).